The primary structure comprises 410 residues: Exopolygalacturonase (410 aa).

An N-terminal signal peptide occupies residues 1 to 22 (MACIDNAMRALFLLALFCVVHG). N89 and N201 each carry an N-linked (GlcNAc...) asparagine glycan. PbH1 repeat units lie at residues 192-218 (CKDM…HMGD), 219-240 (SSGV…SIGP), 242-262 (TSKV…SIGS), 272-293 (VTDI…RIKA), and 337-377 (ASKV…TMDD). The active-site Proton donor is the D233. A disulfide bond links C235 and C252. The N-linked (GlcNAc...) asparagine glycan is linked to N246. Residue H256 is part of the active site. N-linked (GlcNAc...) asparagine glycosylation is present at N349. A disulfide bridge links C364 with C370. An N-linked (GlcNAc...) asparagine glycan is attached at N387. C393 and C409 are oxidised to a cystine.

The protein belongs to the glycosyl hydrolase 28 family. In terms of tissue distribution, pollen.

It is found in the secreted. The protein localises to the cell wall. The enzyme catalyses [(1-&gt;4)-alpha-D-galacturonosyl](n) + H2O = alpha-D-galacturonate + [(1-&gt;4)-alpha-D-galacturonosyl](n-1). Its function is as follows. May function in depolymerizing pectin during pollen development, germination, and tube growth. Acts as an exo-polygalacturonase. The sequence is that of Exopolygalacturonase (PG2C) from Zea mays (Maize).